We begin with the raw amino-acid sequence, 394 residues long: MSQLETRTEPMVVNFGPHHPSMHGVLRLVVTLDGEDVIDCEPVIGYLHRGMEKIAENRTNVMFVPYVSRMDYAAGMFYEAIVVNAPERLANISIPKRASYIRVLMLELNRIANHLLWLGPFLADVGAQTPFFYIFREREMIYDLWEAATGQRLINNNFFRIGGVACDLPWGWLEKCKDFCDWFGPKIDEYEKLITNNPIFRRRIEGLGSISKEKAINWSLSGPMLRASGVPWDLRKVDHYECYDDFDWNIAIAEEGDCYARYRVRIEEMRQSLRILRQACEMIPGGPTENLEASRIAEGKNSPFAGFDFQYVAKKVAPTFKIPNGELYTRLESGKGEIGVFIQGNNDVTPWRFKIRAADLNNLQILPHILKGAKVADIMAILGSIDVIMGSVDR.

It belongs to the complex I 49 kDa subunit family. In terms of assembly, NDH-1 can be composed of about 15 different subunits; different subcomplexes with different compositions have been identified which probably have different functions.

The protein resides in the cellular thylakoid membrane. The catalysed reaction is a plastoquinone + NADH + (n+1) H(+)(in) = a plastoquinol + NAD(+) + n H(+)(out). It carries out the reaction a plastoquinone + NADPH + (n+1) H(+)(in) = a plastoquinol + NADP(+) + n H(+)(out). Its function is as follows. NDH-1 shuttles electrons from an unknown electron donor, via FMN and iron-sulfur (Fe-S) centers, to quinones in the respiratory and/or the photosynthetic chain. The immediate electron acceptor for the enzyme in this species is believed to be plastoquinone. Couples the redox reaction to proton translocation, and thus conserves the redox energy in a proton gradient. Cyanobacterial NDH-1 also plays a role in inorganic carbon-concentration. The protein is NAD(P)H-quinone oxidoreductase subunit H of Prochlorococcus marinus (strain SARG / CCMP1375 / SS120).